The primary structure comprises 763 residues: MGLPSLLVEGVIGCTLVGGLVAVGSAALAVRATIGVVEFNRECVRGARRIVSSGGRCLVVQSPYGNPNQGLIRGEDEEIDNVEESTPVELTPLIEVKAEVDGKEVVVSKKRVVNRHLRQRFVRSIAIEAKNHFGGDISPSKANYLSVSKFLTGKCKERHVVPAHTRDCVSAAMVLVFTPDVHEIRMMAGLASDAAYGIKIAMASILNRKGWCWRLMVNPLDRARWWEMWCVVNGFDSNKPVTFPKXGGLFYLNGVETKIRRGGHPSVIEVDGQCPLKERKLYVQNAITTGYEYRVHNHSYANLRRGLLERVFYVERNKELVSCPQPEPGSFKEMGYLRRRFHRVCGNHTRISANDLVDCYQGRKRTIYENAAASLLDRAIERKDGDLKTFIKAEKFNVNLKSDPAPRVIQPRSPRYNVELGRYLKKYEHHAYKALDKIWGGPTVMKGYTTEEVAQHIWSAWNQFQTPVAIGFDMSRFDQHVSVAALEFEHSCYLACFEGDAHLANLLKMQLVNHGVGFASNGMLRYTKEGCRMSGDMNTALGNCLLACLITKHLMKIRSRLINNGDDCVLICERTDIDYVVSNLTTGWSRFGFNCIAEEPVYEMEKIRFCQMAPVFDGAGWLMVRDPLVSMSKDSHSLVHWNNETNAKQWLKSVGMCGLRIAGGVPVVQEFYQKYVETAGNVRENKNITEKSSSGFFMMADRAKRGYSAVSEVCRFSFYQAFGITPDQQIALEGEIRSLTINTNVGPQCEAADSLWILNRKYQ.

The region spanning 466-579 (TPVAIGFDMS…LICERTDIDY (114 aa)) is the RdRp catalytic domain.

The catalysed reaction is RNA(n) + a ribonucleoside 5'-triphosphate = RNA(n+1) + diphosphate. RNA-dependent RNA polymerase that plays an essential role in the virus replication. This chain is RNA-directed RNA polymerase, found in Carnation mottle virus (CarMV).